The following is a 1055-amino-acid chain: Endo-1,4-beta-xylanase A (1055 aa).

The signal sequence occupies residues 1–29; that stretch reads MRKKRRGFLNASTAVLVGILAGFLGVVLA. The tract at residues 30-357 is a; that stretch reads ATGALGFAVR…TTSAEIKLEM (328 aa). Residues 360–688 enclose the GH10 domain; it reads EEEIPALKDV…KLAYWAIVAP (329 aa). The Proton donor role is filled by Glu498. The active-site Nucleophile is the Glu604. CBM-cenC domains follow at residues 720–851 and 895–1040; these read PIEI…TNSQ and KSVA…PTNN.

Belongs to the glycosyl hydrolase 10 (cellulase F) family.

The catalysed reaction is Endohydrolysis of (1-&gt;4)-beta-D-xylosidic linkages in xylans.. This chain is Endo-1,4-beta-xylanase A (xynA), found in Thermotoga neapolitana.